Reading from the N-terminus, the 276-residue chain is TCP pilus virulence regulatory protein (276 aa).

The region spanning 172-269 is the HTH araC/xylS-type domain; it reads EKISCLVKSD…NVAPSEYLFM (98 aa). 2 consecutive DNA-binding regions (H-T-H motif) follow at residues 189 to 210 and 236 to 259; these read ADIC…ESRG and IKQI…KSTM.

The protein resides in the cytoplasm. Its function is as follows. Probable regulatory protein for the tcp operon. In Vibrio cholerae serotype O1 (strain ATCC 39541 / Classical Ogawa 395 / O395), this protein is TCP pilus virulence regulatory protein (tcpN).